Consider the following 213-residue polypeptide: Na(+)-translocating NADH-quinone reductase subunit D (213 aa).

Transmembrane regions (helical) follow at residues 21–41 (PLIAILGICSALAVTTTVKTA), 42–62 (ITMGLAVSFVTGCSSFFVSLL), 77–97 (IIISLFVIVIDQFLKAFFFNI), 101–121 (LSVFVGLIITNCIVMGRAESL), 131–151 (FLDGLASGLGYGWVLVFVSII), and 183–203 (FGLMVLAPSAFFLLGIMIWVV).

It belongs to the NqrDE/RnfAE family. In terms of assembly, composed of six subunits; NqrA, NqrB, NqrC, NqrD, NqrE and NqrF.

It localises to the cell inner membrane. The catalysed reaction is a ubiquinone + n Na(+)(in) + NADH + H(+) = a ubiquinol + n Na(+)(out) + NAD(+). NQR complex catalyzes the reduction of ubiquinone-1 to ubiquinol by two successive reactions, coupled with the transport of Na(+) ions from the cytoplasm to the periplasm. NqrA to NqrE are probably involved in the second step, the conversion of ubisemiquinone to ubiquinol. This chain is Na(+)-translocating NADH-quinone reductase subunit D, found in Chlamydia felis (strain Fe/C-56) (Chlamydophila felis).